We begin with the raw amino-acid sequence, 81 residues long: MSHSVKIYDTCIGCTQCVRACPTDVLEMIPWDGCKAKQIASAPRTEDCVGCKRCESACPTDFLSVRVYLWHETTRSMGLSY.

4Fe-4S ferredoxin-type domains lie at 2–31 and 39–68; these read SHSV…MIPW and IASA…VRVY. 8 residues coordinate [4Fe-4S] cluster: C11, C14, C17, C21, C48, C51, C54, and C58.

In terms of assembly, the eukaryotic PSI reaction center is composed of at least 11 subunits. The cofactor is [4Fe-4S] cluster.

The protein resides in the plastid. Its subcellular location is the chloroplast thylakoid membrane. The catalysed reaction is reduced [plastocyanin] + hnu + oxidized [2Fe-2S]-[ferredoxin] = oxidized [plastocyanin] + reduced [2Fe-2S]-[ferredoxin]. Its function is as follows. Apoprotein for the two 4Fe-4S centers FA and FB of photosystem I (PSI); essential for photochemical activity. FB is the terminal electron acceptor of PSI, donating electrons to ferredoxin. The C-terminus interacts with PsaA/B/D and helps assemble the protein into the PSI complex. Required for binding of PsaD and PsaE to PSI. PSI is a plastocyanin-ferredoxin oxidoreductase, converting photonic excitation into a charge separation, which transfers an electron from the donor P700 chlorophyll pair to the spectroscopically characterized acceptors A0, A1, FX, FA and FB in turn. The protein is Photosystem I iron-sulfur center of Phalaenopsis aphrodite subsp. formosana (Moth orchid).